Consider the following 549-residue polypeptide: Glucose-6-phosphate isomerase (549 aa).

E355 functions as the Proton donor in the catalytic mechanism. Catalysis depends on residues H386 and K514.

It belongs to the GPI family.

It localises to the cytoplasm. It catalyses the reaction alpha-D-glucose 6-phosphate = beta-D-fructose 6-phosphate. Its pathway is carbohydrate biosynthesis; gluconeogenesis. It functions in the pathway carbohydrate degradation; glycolysis; D-glyceraldehyde 3-phosphate and glycerone phosphate from D-glucose: step 2/4. In terms of biological role, catalyzes the reversible isomerization of glucose-6-phosphate to fructose-6-phosphate. The sequence is that of Glucose-6-phosphate isomerase from Salmonella typhi.